Consider the following 277-residue polypeptide: 3-methyl-2-oxobutanoate hydroxymethyltransferase (277 aa).

Positions 49 and 88 each coordinate Mg(2+). Residues 49–50, D88, and K118 each bind 3-methyl-2-oxobutanoate; that span reads DS. E120 serves as a coordination point for Mg(2+). E186 functions as the Proton acceptor in the catalytic mechanism.

It belongs to the PanB family. In terms of assembly, homodecamer; pentamer of dimers. Mg(2+) serves as cofactor.

It localises to the cytoplasm. The enzyme catalyses 3-methyl-2-oxobutanoate + (6R)-5,10-methylene-5,6,7,8-tetrahydrofolate + H2O = 2-dehydropantoate + (6S)-5,6,7,8-tetrahydrofolate. It participates in cofactor biosynthesis; (R)-pantothenate biosynthesis; (R)-pantoate from 3-methyl-2-oxobutanoate: step 1/2. Catalyzes the reversible reaction in which hydroxymethyl group from 5,10-methylenetetrahydrofolate is transferred onto alpha-ketoisovalerate to form ketopantoate. The polypeptide is 3-methyl-2-oxobutanoate hydroxymethyltransferase (Cereibacter sphaeroides (strain ATCC 17025 / ATH 2.4.3) (Rhodobacter sphaeroides)).